The following is a 144-amino-acid chain: Large ribosomal subunit protein uL15 (144 aa).

The tract at residues 1 to 57 is disordered; the sequence is MKLNDLSPAPGSRREKHRPGRGIGSGLGKTGGRGHKGQTSRSGGSIAPGFEGGQQPL. Gly residues predominate over residues 21-31; that stretch reads RGIGSGLGKTG.

This sequence belongs to the universal ribosomal protein uL15 family. In terms of assembly, part of the 50S ribosomal subunit.

Binds to the 23S rRNA. The chain is Large ribosomal subunit protein uL15 from Pseudomonas entomophila (strain L48).